A 180-amino-acid polypeptide reads, in one-letter code: Cell division protein ZapC (180 aa).

It belongs to the ZapC family. In terms of assembly, interacts directly with FtsZ.

The protein resides in the cytoplasm. Functionally, contributes to the efficiency of the cell division process by stabilizing the polymeric form of the cell division protein FtsZ. Acts by promoting interactions between FtsZ protofilaments and suppressing the GTPase activity of FtsZ. In Vibrio cholerae serotype O1 (strain ATCC 39315 / El Tor Inaba N16961), this protein is Cell division protein ZapC.